The sequence spans 177 residues: Centromere protein R (177 aa).

Lysine 8 participates in a covalent cross-link: Glycyl lysine isopeptide (Lys-Gly) (interchain with G-Cter in SUMO2). Positions 9 to 13 (LDGLL) match the LXXLL motif motif. Serine 17 bears the Phosphoserine mark. The DD1 stretch occupies residues 20–50 (PSKITRKKSVITYSPTTGTCQMSLFASPTSS). Lysine 22 is covalently cross-linked (Glycyl lysine isopeptide (Lys-Gly) (interchain with G-Cter in SUMO2)). Phosphoserine is present on serine 28. The span at 41-50 (MSLFASPTSS) shows a compositional bias: polar residues. Residues 41-81 (MSLFASPTSSEEQKHRNGLSNEKRKKLNHPSLTESKESTTK) are disordered. Residues 63 to 66 (KRKK) carry the Nuclear localization signal motif. A Phosphoserine modification is found at serine 71. Positions 83-113 (NDEFMMLLSKVEKLSEEIMEIMQNLSSIQAL) form a coiled coil. The LXXIL motif motif lies at 172 to 176 (LKAIL).

As to quaternary structure, homodimer; mediated by the coiled coil domain. Isoform 3, but not other isoforms, interacts with the cytoplasmic tail of integrin ITGB3. The relevance of the interaction with ITGB3 is however uncertain, since isoform 3 is mainly nuclear. Interacts with CCNA2 and MTA1. Interacts with NFKB1 NF-kappa-B subunit. Component of the CENPA-CAD complex, composed of CENPI, CENPK, CENPL, CENPO, CENPP, CENPQ, CENPR and CENPS. The CENPA-CAD complex interacts with the CENPA-NAC complex, at least composed of CENPA, CENPC, CENPH, CENPM, CENPN, CENPT and CENPU. Interacts with TASOR. Widely expressed. Expressed in spleen, thymus, prostate, ovary, small intestine and white blood cells. Highly expressed in testis and colon. Isoform 4 is expressed in platelets, lymphocytes and granulocytes.

It localises to the nucleus. The protein resides in the chromosome. The protein localises to the centromere. It is found in the kinetochore. Its subcellular location is the cytoplasm. In terms of biological role, transcription coregulator that can have both coactivator and corepressor functions. Isoform 1, but not other isoforms, is involved in the coactivation of nuclear receptors for retinoid X (RXRs) and thyroid hormone (TRs) in a ligand-dependent fashion. In contrast, it does not coactivate nuclear receptors for retinoic acid, vitamin D, progesterone receptor, nor glucocorticoid. Acts as a coactivator for estrogen receptor alpha. Acts as a transcriptional corepressor via its interaction with the NFKB1 NF-kappa-B subunit, possibly by interfering with the transactivation domain of NFKB1. Induces apoptosis in breast cancer cells, but not in other cancer cells, via a caspase-2 mediated pathway that involves mitochondrial membrane permeabilization but does not require other caspases. May also act as an inhibitor of cyclin A-associated kinase. Also acts a component of the CENPA-CAD (nucleosome distal) complex, a complex recruited to centromeres which is involved in assembly of kinetochore proteins, mitotic progression and chromosome segregation. May be involved in incorporation of newly synthesized CENPA into centromeres via its interaction with the CENPA-NAC complex. In Homo sapiens (Human), this protein is Centromere protein R (ITGB3BP).